Here is a 310-residue protein sequence, read N- to C-terminus: Homeobox protein Hox-A13a (310 aa).

Residues 244–303 (GRKKRVPYTKVQLKELEREYATNKFITKDKRRRISAQTNLSERQVTIWFQNRRVKEKKVV) constitute a DNA-binding region (homeobox).

The protein belongs to the Abd-B homeobox family.

It localises to the nucleus. Sequence-specific transcription factor which is part of a developmental regulatory system that provides cells with specific positional identities on the anterior-posterior axis. This chain is Homeobox protein Hox-A13a (hoxa13a), found in Danio rerio (Zebrafish).